The following is a 281-amino-acid chain: Aldo-keto reductase MMAR_1744 (281 aa).

Catalysis depends on Tyr56, which acts as the Proton donor. Positions 196, 234, 237, 245, 246, and 272 each coordinate NADPH.

It belongs to the aldo/keto reductase family.

This Mycobacterium marinum (strain ATCC BAA-535 / M) protein is Aldo-keto reductase MMAR_1744.